A 263-amino-acid chain; its full sequence is uncharacterized protein (263 aa).

It belongs to the A.longa ORF167/ORF288 family.

The protein resides in the plastid. This is an uncharacterized protein from Euglena longa (Euglenophycean alga).